We begin with the raw amino-acid sequence, 484 residues long: Hexokinase-1 (484 aa).

A Hexokinase domain is found at 25–465; it reads KTLQDHLDEL…SGVGAALVSA (441 aa). The interval 79–212 is hexokinase small subdomain; that stretch reads DGNEHGSYLA…CNNVRLNAIL (134 aa). 90–95 lines the ATP pocket; it reads DLGGTN. Substrate is bound by residues 160-161, 177-178, and 213-214; these read SY, TK, and SD. Residues 213-454 are hexokinase large subdomain; that stretch reads SDTTGTLVAS…SKVVTIPAED (242 aa). Thr-237 contacts ATP. Substrate contacts are provided by Asn-240, Glu-269, and Glu-302. ATP is bound by residues 307–308, 344–348, and 419–423; these read GC, TSVLS, and SVYNL.

This sequence belongs to the hexokinase family. Monomer.

The catalysed reaction is a D-hexose + ATP = a D-hexose 6-phosphate + ADP + H(+). The enzyme catalyses D-mannose + ATP = D-mannose 6-phosphate + ADP + H(+). It carries out the reaction D-fructose + ATP = D-fructose 6-phosphate + ADP + H(+). It catalyses the reaction D-glucose + ATP = D-glucose 6-phosphate + ADP + H(+). The protein operates within carbohydrate metabolism; hexose metabolism. It participates in carbohydrate degradation; glycolysis; D-glyceraldehyde 3-phosphate and glycerone phosphate from D-glucose: step 1/4. Catalyzes the phosphorylation of hexose (six-carbon sugars) to hexose 6-phosphate. Phosphorylates D-fructose, D-mannose and, to a lower extent, D-glucose. Compared to hxk2, has low affinity for D-glucose. This chain is Hexokinase-1, found in Schizosaccharomyces pombe (strain 972 / ATCC 24843) (Fission yeast).